We begin with the raw amino-acid sequence, 429 residues long: MKKMTNLRCIAAQTIEKVVEQGQSLSNVLPAAQKSVGDKDAALLQELCYGVLRTLPQLEWVIGRLMSRPMTGKQRAVHFLIMVGLYQLMFTRIPAHAALAETVEGAVALKRPQLKGLINGVLRQFQRQQDELMQQMNDGDQQYLHPKWLLERLKRAWPAQWKQIVDANNQRPPMWLRVNRQHHSRDAWLTLLEESGKQAFAHPQHGDALRLESPCAVGQLPGFDQGWITVQDVSAQGCVALLAPRDGEQILDLCAAPGGKTTHILEAAPQAKVMAVDVDAQRLARVSENLQRLTMQAEVKQGDGRTPAAWCGDTQFDRILLDAPCSATGVIRRHPDIKWLRRDRDIAELAALQQQILDAVWPHLKPGGTLLYATCSVLPEENHVQIGQFLQRHADATLIETGDLTQPGIQVFPQADGGDGFYYAKLVKQ.

S-adenosyl-L-methionine is bound by residues C254 to K260, D277, D303, and D322. The active-site Nucleophile is the C375.

Belongs to the class I-like SAM-binding methyltransferase superfamily. RsmB/NOP family.

It localises to the cytoplasm. It carries out the reaction cytidine(967) in 16S rRNA + S-adenosyl-L-methionine = 5-methylcytidine(967) in 16S rRNA + S-adenosyl-L-homocysteine + H(+). Functionally, specifically methylates the cytosine at position 967 (m5C967) of 16S rRNA. This Erwinia tasmaniensis (strain DSM 17950 / CFBP 7177 / CIP 109463 / NCPPB 4357 / Et1/99) protein is Ribosomal RNA small subunit methyltransferase B.